Here is a 549-residue protein sequence, read N- to C-terminus: Glucose-6-phosphate isomerase (549 aa).

Catalysis depends on glutamate 355, which acts as the Proton donor. Catalysis depends on residues histidine 386 and lysine 514.

This sequence belongs to the GPI family.

Its subcellular location is the cytoplasm. The enzyme catalyses alpha-D-glucose 6-phosphate = beta-D-fructose 6-phosphate. Its pathway is carbohydrate biosynthesis; gluconeogenesis. The protein operates within carbohydrate degradation; glycolysis; D-glyceraldehyde 3-phosphate and glycerone phosphate from D-glucose: step 2/4. Functionally, catalyzes the reversible isomerization of glucose-6-phosphate to fructose-6-phosphate. The polypeptide is Glucose-6-phosphate isomerase (Klebsiella pneumoniae (strain 342)).